The following is a 91-amino-acid chain: Elongation factor 1-beta (91 aa).

It belongs to the EF-1-beta/EF-1-delta family.

In terms of biological role, promotes the exchange of GDP for GTP in EF-1-alpha/GDP, thus allowing the regeneration of EF-1-alpha/GTP that could then be used to form the ternary complex EF-1-alpha/GTP/AAtRNA. This is Elongation factor 1-beta from Thermococcus onnurineus (strain NA1).